Consider the following 360-residue polypeptide: Phospho-N-acetylmuramoyl-pentapeptide-transferase (360 aa).

A run of 10 helical transmembrane segments spans residues 21-41 (YLTLRVILGTLTALMLCLWLG), 73-93 (TMGGAMILIAIAVSTLLWGDL), 94-114 (TNHYVWLVLAVTLGFGAIGWV), 145-165 (AVTLYLTAASPVEVSLIVPLF), 168-188 (VVVPLGLFYIVLTYFVIVGSS), 199-219 (GLAIMPTVLVAMGLAIFAYAS), 236-256 (AGELAVFCGTIAGAGLGFLWF), 263-283 (VFMGDVGALALGAALGVVAVI), 288-308 (IVLFIMGGVFVMETVSVMLQV), and 339-359 (IVRFWIITVVLVLLGLATLKI).

This sequence belongs to the glycosyltransferase 4 family. MraY subfamily. Mg(2+) serves as cofactor.

It is found in the cell inner membrane. It carries out the reaction UDP-N-acetyl-alpha-D-muramoyl-L-alanyl-gamma-D-glutamyl-meso-2,6-diaminopimeloyl-D-alanyl-D-alanine + di-trans,octa-cis-undecaprenyl phosphate = di-trans,octa-cis-undecaprenyl diphospho-N-acetyl-alpha-D-muramoyl-L-alanyl-D-glutamyl-meso-2,6-diaminopimeloyl-D-alanyl-D-alanine + UMP. Its pathway is cell wall biogenesis; peptidoglycan biosynthesis. Its function is as follows. Catalyzes the initial step of the lipid cycle reactions in the biosynthesis of the cell wall peptidoglycan: transfers peptidoglycan precursor phospho-MurNAc-pentapeptide from UDP-MurNAc-pentapeptide onto the lipid carrier undecaprenyl phosphate, yielding undecaprenyl-pyrophosphoryl-MurNAc-pentapeptide, known as lipid I. This chain is Phospho-N-acetylmuramoyl-pentapeptide-transferase, found in Chromohalobacter salexigens (strain ATCC BAA-138 / DSM 3043 / CIP 106854 / NCIMB 13768 / 1H11).